Here is a 432-residue protein sequence, read N- to C-terminus: MRLLTRRAGHGAATLALRVIHMQRVPVLRLPAILDMERKIPSRESPRRLSAKPGRGTEMKKLARPLGVVAADSDKDSGFSDGSSECLSSAEQMESEDMLSALGCKREDKRRQPSKAADTALPTLPPMVVMKSVLVKQGSSSSQLQSWTVQPSFEVISAQPQLFVLHPPVPSPVSSCQTGEKKSESRNYLPILNSYTKIAPHPGKRGLNSEDRGTSGVSKKLCTERPGPSLSSSEPAKTGRVLSSPSTPAPPSSKLTEDSTLQGVPSLGAGGSPQTLQPVSSSHVAKAPSLTLASPASPVCASDSTLHGLESSSPLSPLSASYTSPLWAAEHLCRSPDIFSEQRQNKHRRFQNTLVVLHKSGLLEITLKTKELIRQNQATQAELDQLKEQTQMFIEATKSRAPQAWAKLQASLTSGSSHSGSDLDTLSDHPDV.

2 disordered regions span residues 71–98 and 194–315; these read ADSD…SEDM and SYTK…SSPL. Residue S246 is modified to Phosphoserine. Residues 272–283 are compositionally biased toward polar residues; that stretch reads SPQTLQPVSSSH. The stretch at 364–395 forms a coiled coil; that stretch reads EITLKTKELIRQNQATQAELDQLKEQTQMFIE. The disordered stretch occupies residues 408–432; that stretch reads LQASLTSGSSHSGSDLDTLSDHPDV. Over residues 411–424 the composition is skewed to low complexity; sequence SLTSGSSHSGSDLD.

As to quaternary structure, interacts with CLOCK. Forms a ternary complex with the CLOCK-BMAL1 heterodimer. Interacts with CAD and HSPA5. Expressed in the heart, kidney and liver and shows a circadian oscillation in these tissues with a peak at circadian time 14 hours (at protein level). Expressed in the brain, including the suprachiasmatic nucleus (SCN) of the brain, and in multiple peripheral tissues such as heart, liver and kidney. Exhibits a circadian oscillation in the peripheral tissues with a peak at circadian time 14 hours.

The protein resides in the nucleus. The protein localises to the cytoplasm. It localises to the cytosol. Transcriptional repressor which may act as a negative-feedback regulator of CLOCK-BMAL1 transcriptional activity in the circadian-clock mechanism. May stimulate BMAL1-dependent phosphorylation of CLOCK. However, the physiological relevance of these observations is unsure, since experiments in knockout mice showed that CIPC is not critially required for basic circadian clock. In Mus musculus (Mouse), this protein is CLOCK-interacting pacemaker (Cipc).